Reading from the N-terminus, the 593-residue chain is Phosphoinositide phosphatase SAC6 (593 aa).

The SAC domain maps to Leu-128–Gly-456. The Phosphatase catalytic core motif lies at Arg-391–Asn-402. A run of 2 helical transmembrane segments spans residues Ala-526–Met-546 and Tyr-555–Val-575.

Predominantly expressed in flowers.

The protein resides in the endoplasmic reticulum membrane. In terms of biological role, phosphoinositide phosphatase that hydrolyzes PtdIns(3)P and PtdIns(4)P. Involved in priming for different defense responses. The protein is Phosphoinositide phosphatase SAC6 (SAC6) of Arabidopsis thaliana (Mouse-ear cress).